The chain runs to 529 residues: Glycerol kinase 5 (529 aa).

ATP is bound by residues Ser-28 and Ser-29. Glycerol contacts are provided by Arg-98, Asp-275, and Gln-276. Residues Thr-297, Gly-340, and Gly-440 each coordinate ATP.

This sequence belongs to the FGGY kinase family.

It is found in the cytoplasm. It catalyses the reaction glycerol + ATP = sn-glycerol 3-phosphate + ADP + H(+). It functions in the pathway polyol metabolism; glycerol degradation via glycerol kinase pathway; sn-glycerol 3-phosphate from glycerol: step 1/1. In terms of biological role, skin-specific kinase that plays a key role in glycerol metabolism, catalyzing its phosphorylation to produce sn-glycerol 3-phosphate. Involved in skin-specific regulation of sterol regulatory element-binding protein (SREBP) processing and lipid biosynthesis. The chain is Glycerol kinase 5 from Homo sapiens (Human).